Consider the following 598-residue polypeptide: Nuclear receptor subfamily 4 group A member 2 (598 aa).

The disordered stretch occupies residues 1–22 (MPCVQAQYGSSPQGASPASQSY). The span at 8–22 (YGSSPQGASPASQSY) shows a compositional bias: low complexity. The nuclear receptor DNA-binding region spans 260–335 (EGLCAVCGDN…VGMVKEVVRT (76 aa)). NR C4-type zinc fingers lie at residues 263 to 283 (CAVC…CEGC) and 299 to 318 (CLAN…CQYC). A Bipartite nuclear localization signal (NLS1) motif is present at residues 287 to 314 (FKRTVQKNAKYVCLANKNCPVDKRRRNR). A disordered region spans residues 337 to 361 (SLKGRRGRLPSKPKSPQEPSPPSPP). The Nuclear localization signal (NLS1) signature appears at 338-350 (LKGRRGRLPSKPK). Over residues 352 to 361 (PQEPSPPSPP) the composition is skewed to pro residues. Residues 360–595 (PPVSLISALV…AIIDKLFLDT (236 aa)) enclose the NR LBD domain. Positions 443 to 452 (FLELFVLRLA) match the nuclear export sequence (NES1) motif. The nuclear export sequence (NES2) signature appears at 568–577 (QGLQRIFYLK).

It belongs to the nuclear hormone receptor family. NR4 subfamily. Interacts with SFPQ, NCOR2, SIN3A and HADC1. The interaction with NCOR2 increases in the absence of PITX3. Interacts with PER2.

The protein resides in the cytoplasm. It localises to the nucleus. In terms of biological role, transcriptional regulator which is important for the differentiation and maintenance of meso-diencephalic dopaminergic (mdDA) neurons during development. It is crucial for expression of a set of genes such as SLC6A3, SLC18A2, TH and DRD2 which are essential for development of mdDA neurons. This Bos taurus (Bovine) protein is Nuclear receptor subfamily 4 group A member 2 (NR4A2).